We begin with the raw amino-acid sequence, 297 residues long: 33 kDa chaperonin (297 aa).

Disulfide bonds link Cys232–Cys234 and Cys266–Cys269.

It belongs to the HSP33 family. Under oxidizing conditions two disulfide bonds are formed involving the reactive cysteines. Under reducing conditions zinc is bound to the reactive cysteines and the protein is inactive.

It is found in the cytoplasm. In terms of biological role, redox regulated molecular chaperone. Protects both thermally unfolding and oxidatively damaged proteins from irreversible aggregation. Plays an important role in the bacterial defense system toward oxidative stress. This Pseudomonas paraeruginosa (strain DSM 24068 / PA7) (Pseudomonas aeruginosa (strain PA7)) protein is 33 kDa chaperonin.